The chain runs to 188 residues: MPVADTSQLTSGVAERYASSLFELALEQGAVDSVTADLDRFQAMLDESAELKRFVASPVFSAEDQLKAIIAISERAGISGFFANFLKVVARNRRLFALPGMIKAFRVIAANHRGEISAEVTSAHALTAEQENELKAALKGVTGKDVAIAVTVDPSILGGLIVKVGSRQIDTSLRTKLSTLKLALKEVG.

The protein belongs to the ATPase delta chain family. In terms of assembly, F-type ATPases have 2 components, F(1) - the catalytic core - and F(0) - the membrane proton channel. F(1) has five subunits: alpha(3), beta(3), gamma(1), delta(1), epsilon(1). F(0) has three main subunits: a(1), b(2) and c(10-14). The alpha and beta chains form an alternating ring which encloses part of the gamma chain. F(1) is attached to F(0) by a central stalk formed by the gamma and epsilon chains, while a peripheral stalk is formed by the delta and b chains.

It localises to the cell inner membrane. Functionally, f(1)F(0) ATP synthase produces ATP from ADP in the presence of a proton or sodium gradient. F-type ATPases consist of two structural domains, F(1) containing the extramembraneous catalytic core and F(0) containing the membrane proton channel, linked together by a central stalk and a peripheral stalk. During catalysis, ATP synthesis in the catalytic domain of F(1) is coupled via a rotary mechanism of the central stalk subunits to proton translocation. This protein is part of the stalk that links CF(0) to CF(1). It either transmits conformational changes from CF(0) to CF(1) or is implicated in proton conduction. The chain is ATP synthase subunit delta from Rhizobium etli (strain ATCC 51251 / DSM 11541 / JCM 21823 / NBRC 15573 / CFN 42).